Here is a 122-residue protein sequence, read N- to C-terminus: Small ribosomal subunit protein uS13 (122 aa).

Residues 95-122 form a disordered region; it reads GLPVRGQRTKTNARTRKGPKKTIAGKKK.

Belongs to the universal ribosomal protein uS13 family. In terms of assembly, part of the 30S ribosomal subunit. Forms a loose heterodimer with protein S19. Forms two bridges to the 50S subunit in the 70S ribosome.

Located at the top of the head of the 30S subunit, it contacts several helices of the 16S rRNA. In the 70S ribosome it contacts the 23S rRNA (bridge B1a) and protein L5 of the 50S subunit (bridge B1b), connecting the 2 subunits; these bridges are implicated in subunit movement. Contacts the tRNAs in the A and P-sites. This Corynebacterium diphtheriae (strain ATCC 700971 / NCTC 13129 / Biotype gravis) protein is Small ribosomal subunit protein uS13.